Consider the following 1937-residue polypeptide: Myosin-2 (1937 aa).

One can recognise a Myosin N-terminal SH3-like domain in the interval 33–82; it reads DAKTSVFVAEPKESFVKGTIQSREGGKVTVKTDAGATLTVKEDQVFPMNP. A phosphothreonine mark is found at Thr-64 and Thr-69. Positions 86-780 constitute a Myosin motor domain; it reads DKIEDMAMMT…LLGLLEEMRD (695 aa). Position 130 is an N6,N6,N6-trimethyllysine (Lys-130). 179–186 is an ATP binding site; it reads GESGAGKT. Tyr-387 bears the Phosphotyrosine mark. Thr-417 bears the Phosphothreonine mark. Phosphoserine is present on Ser-623. The segment at 657–679 is actin-binding; that stretch reads LNKLMTNLRSTHPHFVRCIIPNE. Pros-methylhistidine is present on His-755. An actin-binding region spans residues 759-773; the sequence is KFGHTKVFFKAGLLG. An IQ domain is found at 783 to 812; the sequence is LAQIITRTQARCRGFLARVEYQKMVERRES. Residues 841–1937 are a coiled coil; the sequence is LLKSAETEKE…EVHTKIISEE (1097 aa). Phosphoserine is present on Ser-1094. Disordered stretches follow at residues 1124–1145 and 1151–1170; these read IEAE…SREL and RLEE…KKRE. The segment covering 1126-1145 has biased composition (basic and acidic residues); that stretch reads AERASRAKAEKQRSDLSREL. 2 positions are modified to phosphoserine: Ser-1160 and Ser-1235. Thr-1239 bears the Phosphothreonine mark. Phosphoserine is present on Ser-1241. Thr-1253 is subject to Phosphothreonine. Residue Ser-1259 is modified to Phosphoserine. Thr-1284 bears the Phosphothreonine mark. Residues Ser-1290, Ser-1301, and Ser-1304 each carry the phosphoserine modification. Phosphotyrosine is present on Tyr-1462. Thr-1465 is modified (phosphothreonine). Residue Ser-1472 is modified to Phosphoserine. At Tyr-1490 the chain carries Phosphotyrosine. Ser-1493 is subject to Phosphoserine. The residue at position 1499 (Thr-1499) is a Phosphothreonine. Ser-1512 carries the phosphoserine modification. Residue Thr-1515 is modified to Phosphothreonine. Phosphoserine is present on residues Ser-1540, Ser-1552, Ser-1572, Ser-1712, and Ser-1724. 2 positions are modified to phosphothreonine: Thr-1728 and Thr-1734. Residue Ser-1737 is modified to Phosphoserine. The segment at 1883–1913 is disordered; sequence QAEEAEEQSNTNLSKFRKLQHELEEAEERAD.

The protein belongs to the TRAFAC class myosin-kinesin ATPase superfamily. Myosin family. In terms of assembly, muscle myosin is a hexameric protein that consists of 2 heavy chain subunits (MHC), 2 alkali light chain subunits (MLC) and 2 regulatory light chain subunits (MLC-2). Interacts with GCSAM.

It localises to the cytoplasm. The protein resides in the myofibril. Functionally, myosins are actin-based motor molecules with ATPase activity essential for muscle contraction. The polypeptide is Myosin-2 (MYH2) (Equus caballus (Horse)).